We begin with the raw amino-acid sequence, 328 residues long: Malate dehydrogenase 1 (328 aa).

12-18 contacts NAD(+); it reads GAAGQIA. Residues Arg-93 and Arg-99 each coordinate substrate. NAD(+) contacts are provided by residues Asn-106, Gln-113, and 130–132; that span reads VGN. Substrate-binding residues include Asn-132 and Arg-163. His-188 functions as the Proton acceptor in the catalytic mechanism.

It belongs to the LDH/MDH superfamily. MDH type 2 family.

It carries out the reaction (S)-malate + NAD(+) = oxaloacetate + NADH + H(+). Catalyzes the reversible oxidation of malate to oxaloacetate. The protein is Malate dehydrogenase 1 of Burkholderia vietnamiensis (strain G4 / LMG 22486) (Burkholderia cepacia (strain R1808)).